We begin with the raw amino-acid sequence, 321 residues long: S-methyl-5'-thioadenosine phosphorylase (321 aa).

Phosphate contacts are provided by residues T30, 73–74, and 106–107; these read RH and SA. M215 is a binding site for substrate. Position 216 (S216) interacts with phosphate. 239–241 lines the substrate pocket; that stretch reads DYD.

This sequence belongs to the PNP/MTAP phosphorylase family. MTAP subfamily. As to quaternary structure, homotrimer.

The protein localises to the cytoplasm. The protein resides in the nucleus. It carries out the reaction S-methyl-5'-thioadenosine + phosphate = 5-(methylsulfanyl)-alpha-D-ribose 1-phosphate + adenine. It participates in amino-acid biosynthesis; L-methionine biosynthesis via salvage pathway; S-methyl-5-thio-alpha-D-ribose 1-phosphate from S-methyl-5'-thioadenosine (phosphorylase route): step 1/1. Functionally, catalyzes the reversible phosphorylation of S-methyl-5'-thioadenosine (MTA) to adenine and 5-methylthioribose-1-phosphate. Involved in the breakdown of MTA, a major by-product of polyamine biosynthesis. Responsible for the first step in the methionine salvage pathway after MTA has been generated from S-adenosylmethionine. Has broad substrate specificity with 6-aminopurine nucleosides as preferred substrates. The chain is S-methyl-5'-thioadenosine phosphorylase from Yarrowia lipolytica (strain CLIB 122 / E 150) (Yeast).